The chain runs to 546 residues: Arginine--tRNA ligase (546 aa).

The short motif at 122–132 (ANPTGPFTVGH) is the 'HIGH' region element.

Belongs to the class-I aminoacyl-tRNA synthetase family. In terms of assembly, monomer.

The protein localises to the cytoplasm. It catalyses the reaction tRNA(Arg) + L-arginine + ATP = L-arginyl-tRNA(Arg) + AMP + diphosphate. The chain is Arginine--tRNA ligase (argS) from Thermotoga maritima (strain ATCC 43589 / DSM 3109 / JCM 10099 / NBRC 100826 / MSB8).